The chain runs to 974 residues: Membrane-associated phosphatidylinositol transfer protein 3 (974 aa).

Phosphoserine is present on residues S30, S31, S109, S295, S298, S321, S343, and S495. The segment at 310 to 347 (CSLASSKRLSKSNVDVSSGVEDEDPKRPLPRKQSDSST) is disordered. Over residues 312-325 (LASSKRLSKSNVDV) the composition is skewed to polar residues. Positions 390-594 (FDFDVSDFFL…VAFILRQVMR (205 aa)) constitute a DDHD domain. The tract at residues 497 to 535 (PLLDAPASPPQAPRFQRTERRLSKGSSHSDSSESSDSLA) is disordered. The span at 520-533 (KGSSHSDSSESSDS) shows a compositional bias: low complexity. Phosphoserine is present on residues S612, S907, S928, and S946. A disordered region spans residues 927–974 (MSVQQPDPPAANPKPERAQSQPESDKDHERPLPALSWARGPPKFESVP).

The protein belongs to the PtdIns transfer protein family. PI transfer class IIA subfamily. Interacts with PTK2B via its C-terminus.

Its subcellular location is the endomembrane system. Its function is as follows. Catalyzes the transfer of phosphatidylinositol and phosphatidylcholine between membranes (in vitro). Binds calcium ions. This is Membrane-associated phosphatidylinositol transfer protein 3 (Pitpnm3) from Mus musculus (Mouse).